The primary structure comprises 133 residues: Small ribosomal subunit protein uS8 (133 aa).

Residues 1–28 (MANHDPISDMLTRIRNASEKRHEKTKVP) form a disordered region. The span at 16-26 (NASEKRHEKTK) shows a compositional bias: basic and acidic residues.

Belongs to the universal ribosomal protein uS8 family. In terms of assembly, part of the 30S ribosomal subunit. Contacts proteins S5 and S12.

Functionally, one of the primary rRNA binding proteins, it binds directly to 16S rRNA central domain where it helps coordinate assembly of the platform of the 30S subunit. This is Small ribosomal subunit protein uS8 from Prochlorococcus marinus (strain NATL1A).